Consider the following 77-residue polypeptide: Putative ankyrin repeat protein RC0956 (77 aa).

One copy of the ANK repeat lies at 8–38 (TDISPLMLASEYGQVTIVKYLLKHGNYNVKG).

This chain is Putative ankyrin repeat protein RC0956, found in Rickettsia conorii (strain ATCC VR-613 / Malish 7).